A 90-amino-acid polypeptide reads, in one-letter code: Auxin-responsive protein SAUR19 (90 aa).

The protein belongs to the ARG7 family. In terms of assembly, interacts with and inhibits PP2C-D subfamily of type 2C phosphatases such as PP2C67/PP2C-D1, PP2C64/PP2C-D5 and PP2C46/PP2C-D6.

The protein resides in the cell membrane. Provide a mechanistic link between auxin and plasma membrane H(+)-ATPases (PM H(+)-ATPases, e.g. AHA1 and AHA2), and triggers PM H(+)-ATPases activity by promoting phosphorylation of their C-terminal autoinhibitory domain as a result of PP2C-D subfamily of type 2C phosphatases inhibition, thus leading to the acidification of the apoplast and the facilitation of solutes and water uptake to drive cell expansion. Prevents the apical hook maintenance of etiolated seedlings. Functions as positive effectors of cell expansion through modulation of auxin transport. The protein is Auxin-responsive protein SAUR19 of Arabidopsis thaliana (Mouse-ear cress).